A 272-amino-acid chain; its full sequence is 3-hydroxyanthranilate 3,4-dioxygenase (272 aa).

The interval 1–154 is domain A (catalytic); the sequence is MMEWIDENSS…SEEHKTGKPS (154 aa). Arg38 is an O2 binding site. Fe cation is bound by residues His42, Glu48, and His86. Position 48 (Glu48) interacts with substrate. Substrate is bound by residues Arg90 and Glu100. A linker region spans residues 155–169; sequence KESSCSINVDTETEL. Residues 170 to 272 are domain B; it reads MEPFPLKQWL…SITVDSLANK (103 aa).

It belongs to the 3-HAO family. Fe(2+) is required as a cofactor.

The protein resides in the cytoplasm. It catalyses the reaction 3-hydroxyanthranilate + O2 = (2Z,4Z)-2-amino-3-carboxymuconate 6-semialdehyde. The protein operates within cofactor biosynthesis; NAD(+) biosynthesis; quinolinate from L-kynurenine: step 3/3. Its function is as follows. Catalyzes the oxidative ring opening of 3-hydroxyanthranilate to 2-amino-3-carboxymuconate semialdehyde, which spontaneously cyclizes to quinolinate. This chain is 3-hydroxyanthranilate 3,4-dioxygenase, found in Nematostella vectensis (Starlet sea anemone).